The following is a 376-amino-acid chain: N-acetyldiaminopimelate deacetylase (376 aa).

The active site involves Asp69. Glu128 (proton acceptor) is an active-site residue.

The protein belongs to the peptidase M20A family. N-acetyldiaminopimelate deacetylase subfamily.

It catalyses the reaction N-acetyl-(2S,6S)-2,6-diaminopimelate + H2O = (2S,6S)-2,6-diaminopimelate + acetate. Its pathway is amino-acid biosynthesis; L-lysine biosynthesis via DAP pathway; LL-2,6-diaminopimelate from (S)-tetrahydrodipicolinate (acetylase route): step 3/3. Catalyzes the conversion of N-acetyl-diaminopimelate to diaminopimelate and acetate. The protein is N-acetyldiaminopimelate deacetylase of Streptococcus pneumoniae (strain JJA).